The following is a 156-amino-acid chain: Large ribosomal subunit protein eL29 (156 aa).

The span at 1–26 (MAKSKNHTTHNQSRKWHRNGIKKPRS) shows a compositional bias: basic residues. Disordered stretches follow at residues 1–35 (MAKS…LKGV) and 116–156 (RRLC…VKAP). An N6-methyllysine modification is found at Lys-5. At Ser-31 the chain carries Phosphoserine. An N6-acetyllysine modification is found at Lys-33. 2 repeat units span residues 129–136 (AEAKAPAK) and 137–144 (AQAKAPAQ). Residues 129–144 (AEAKAPAKAQAKAPAQ) form a 2 X 8 AA tandem repeats of A-X-A-K-A-P-A-[KQ] region. Positions 134 to 156 (PAKAQAKAPAQAPKGAQAPVKAP) are enriched in low complexity.

The protein belongs to the eukaryotic ribosomal protein eL29 family. As to quaternary structure, component of the large ribosomal subunit.

Its subcellular location is the cytoplasm. In terms of biological role, component of the large ribosomal subunit. The ribosome is a large ribonucleoprotein complex responsible for the synthesis of proteins in the cell. This Rattus norvegicus (Rat) protein is Large ribosomal subunit protein eL29 (Rpl29).